Consider the following 226-residue polypeptide: Glutathione peroxidase 3 (226 aa).

The signal sequence occupies residues 1 to 24 (MARLLQASCLLSLLLAGFLPQSRG). Sec-73 is an active-site residue. Residue Sec-73 is a non-standard amino acid, selenocysteine.

The protein belongs to the glutathione peroxidase family. In terms of assembly, homotetramer. In terms of tissue distribution, expressed intensively in the kidney and adrenal gland, and weakly in the cerebellum, heart, and lung. Secreted in plasma.

The protein localises to the secreted. The catalysed reaction is 2 glutathione + H2O2 = glutathione disulfide + 2 H2O. The enzyme catalyses tert-butyl hydroperoxide + 2 glutathione = tert-butanol + glutathione disulfide + H2O. Functionally, protects cells and enzymes from oxidative damage, by catalyzing the reduction of hydrogen peroxide, lipid peroxides and organic hydroperoxide, by glutathione. This Macaca fuscata fuscata (Japanese macaque) protein is Glutathione peroxidase 3.